The primary structure comprises 232 residues: Large ribosomal subunit protein uL1 (232 aa).

It belongs to the universal ribosomal protein uL1 family. Part of the 50S ribosomal subunit.

Binds directly to 23S rRNA. The L1 stalk is quite mobile in the ribosome, and is involved in E site tRNA release. Its function is as follows. Protein L1 is also a translational repressor protein, it controls the translation of the L11 operon by binding to its mRNA. This is Large ribosomal subunit protein uL1 from Methylorubrum extorquens (strain CM4 / NCIMB 13688) (Methylobacterium extorquens).